Here is a 1033-residue protein sequence, read N- to C-terminus: RNA cytidine acetyltransferase (1033 aa).

ATP is bound by residues 285–294 and Arg465; that span reads GRGKSAALGL. The 135-residue stretch at 560–694 folds into the N-acetyltransferase domain; that stretch reads VDLKNPKLPD…IHVRDAKTMP (135 aa). Acetyl-CoA contacts are provided by residues 626-628, 633-639, and Arg727; these read IAV and VKMGYGT. The tract at residues 988–1033 is disordered; that stretch reads ENQIQKTNGKGARVVSIKGEKRKNNSLDASDKKTKEKPSSKKKFRK. A compositionally biased stretch (basic and acidic residues) spans 1005-1026; it reads KGEKRKNNSLDASDKKTKEKPS.

The protein belongs to the RNA cytidine acetyltransferase family. NAT10 subfamily. In terms of assembly, interacts with tan1.

The protein localises to the nucleus. The protein resides in the nucleolus. It carries out the reaction a cytidine in 18S rRNA + acetyl-CoA + ATP + H2O = an N(4)-acetylcytidine in 18S rRNA + ADP + phosphate + CoA + H(+). It catalyses the reaction a cytidine in tRNA + acetyl-CoA + ATP + H2O = an N(4)-acetylcytidine in tRNA + ADP + phosphate + CoA + H(+). Its function is as follows. RNA cytidine acetyltransferase with specificity toward both 18S rRNA and tRNAs. Catalyzes the formation of N(4)-acetylcytidine (ac4C) at positions 1297 and 1815 in 18S rRNA. Required for early nucleolar cleavages of precursor rRNA at sites A0, A1 and A2 during 18S rRNA synthesis. Catalyzes the formation of ac4C in serine and leucine tRNAs. Requires the tRNA-binding adapter protein tan1 for full tRNA acetyltransferase activity but not for 18S rRNA acetylation. This is RNA cytidine acetyltransferase from Schizosaccharomyces pombe (strain 972 / ATCC 24843) (Fission yeast).